We begin with the raw amino-acid sequence, 194 residues long: Ribosome maturation factor RimM (194 aa).

The region spanning 92–190 (DDGYYDHELI…ALVVTPPEGL (99 aa)) is the PRC barrel domain.

This sequence belongs to the RimM family. Binds ribosomal protein uS19.

It localises to the cytoplasm. Functionally, an accessory protein needed during the final step in the assembly of 30S ribosomal subunit, possibly for assembly of the head region. Essential for efficient processing of 16S rRNA. May be needed both before and after RbfA during the maturation of 16S rRNA. It has affinity for free ribosomal 30S subunits but not for 70S ribosomes. The polypeptide is Ribosome maturation factor RimM (Corynebacterium urealyticum (strain ATCC 43042 / DSM 7109)).